A 278-amino-acid chain; its full sequence is MTTRIDTRFAELKKQGRSAFVTFVMAGDPDLATSLQVLKALPAAGADIIEIGMPFTDPMADGPAIQAAGLRALHSGATLSHTLGLVRDFRKDDDTTPMVLMGYYNPIYIYGVDAFLADAKAAGVDGLIIVDLPPEEDSELCLPAMKAGLNFIRLATPTTDEKRLPAVLANTSGFVYYVSITGITGSASADSAAVGDAVARIKRHTDLPVCVGFGIRTPEAARAIAAEADGAVVGSALIDALQKSLDADNRATKATVGAVADLVASLAAGVRGAKQAAE.

Residues glutamate 50 and aspartate 61 each act as proton acceptor in the active site.

It belongs to the TrpA family. In terms of assembly, tetramer of two alpha and two beta chains.

The catalysed reaction is (1S,2R)-1-C-(indol-3-yl)glycerol 3-phosphate + L-serine = D-glyceraldehyde 3-phosphate + L-tryptophan + H2O. The protein operates within amino-acid biosynthesis; L-tryptophan biosynthesis; L-tryptophan from chorismate: step 5/5. Functionally, the alpha subunit is responsible for the aldol cleavage of indoleglycerol phosphate to indole and glyceraldehyde 3-phosphate. This chain is Tryptophan synthase alpha chain, found in Rhodopseudomonas palustris (strain BisB5).